The sequence spans 161 residues: UPF0262 protein SPOA0072 (161 aa).

Positions 1–21 (MTMSRISHIELDDSNLPPPTP) are disordered.

The protein belongs to the UPF0262 family.

This chain is UPF0262 protein SPOA0072, found in Ruegeria pomeroyi (strain ATCC 700808 / DSM 15171 / DSS-3) (Silicibacter pomeroyi).